Reading from the N-terminus, the 408-residue chain is Multidrug resistance protein MdtG (408 aa).

10 helical membrane-spanning segments follow: residues Leu-16–Phe-36, Ile-58–Ala-78, Leu-92–Ile-112, Ala-115–Val-135, Thr-146–Ala-166, Pro-173–Ile-193, Leu-224–Leu-244, Val-256–Pro-276, Ile-290–Thr-310, and Ala-378–Leu-398.

Belongs to the major facilitator superfamily. DHA1 family. MdtG (TC 2.A.1.2.20) subfamily.

It is found in the cell inner membrane. In terms of biological role, confers resistance to fosfomycin and deoxycholate. The sequence is that of Multidrug resistance protein MdtG from Escherichia coli O17:K52:H18 (strain UMN026 / ExPEC).